We begin with the raw amino-acid sequence, 355 residues long: uncharacterized protein (355 aa).

Belongs to the TmcAL family.

This is an uncharacterized protein from Methanocaldococcus jannaschii (strain ATCC 43067 / DSM 2661 / JAL-1 / JCM 10045 / NBRC 100440) (Methanococcus jannaschii).